The primary structure comprises 260 residues: Carbonic anhydrase 3 (260 aa).

Residue Ala-2 is modified to N-acetylalanine. The Alpha-carbonic anhydrase domain maps to 3–259 (KEWGYASHNG…VKGRVVRASF (257 aa)). Phosphoserine is present on residues Ser-29, Ser-43, Ser-48, Ser-50, and Ser-55. Positions 64 to 67 (KTCR) are involved in proton transfer. The residue at position 73 (Thr-73) is a Phosphothreonine. Positions 94, 96, and 119 each coordinate Zn(2+). Tyr-127 carries the phosphotyrosine modification. A phosphothreonine mark is found at Thr-129 and Thr-176. S-glutathionyl cysteine occurs at positions 182 and 187. 198 to 199 (TT) is a binding site for substrate. Thr-216 bears the Phosphothreonine mark. Residue Ser-219 is modified to Phosphoserine.

Belongs to the alpha-carbonic anhydrase family. It depends on Zn(2+) as a cofactor. Post-translationally, S-thiolated both by thiol-disulfide exchange with glutathione disulfide and by oxyradical-initiated S-thiolation with reduced glutathione. In terms of processing, S-glutathionylated in hepatocytes under oxidative stress. Expressed at lower levels in adipose tissue from animals that were either genetically obese or had experimentally induced obesity.

Its subcellular location is the cytoplasm. The enzyme catalyses hydrogencarbonate + H(+) = CO2 + H2O. Inhibited by acetazolamide. Functionally, reversible hydration of carbon dioxide. This Mus musculus (Mouse) protein is Carbonic anhydrase 3.